The primary structure comprises 362 residues: Peptide chain release factor 1 (362 aa).

An N5-methylglutamine modification is found at glutamine 237. Over residues 284–295 the composition is skewed to basic and acidic residues; it reads EEEKRQAEETST. Positions 284–304 are disordered; that stretch reads EEEKRQAEETSTRRNLVASGD.

Belongs to the prokaryotic/mitochondrial release factor family. Methylated by PrmC. Methylation increases the termination efficiency of RF1.

The protein localises to the cytoplasm. Peptide chain release factor 1 directs the termination of translation in response to the peptide chain termination codons UAG and UAA. This chain is Peptide chain release factor 1, found in Pseudoalteromonas atlantica (strain T6c / ATCC BAA-1087).